The chain runs to 372 residues: Glutamate 5-kinase (372 aa).

Lysine 14 contributes to the ATP binding site. Serine 54, aspartate 141, and asparagine 153 together coordinate substrate. 173–174 contacts ATP; the sequence is TD. In terms of domain architecture, PUA spans 280-358; sequence RGRVIIDAGA…SEIESVLGHL (79 aa).

It belongs to the glutamate 5-kinase family.

Its subcellular location is the cytoplasm. It carries out the reaction L-glutamate + ATP = L-glutamyl 5-phosphate + ADP. It functions in the pathway amino-acid biosynthesis; L-proline biosynthesis; L-glutamate 5-semialdehyde from L-glutamate: step 1/2. Functionally, catalyzes the transfer of a phosphate group to glutamate to form L-glutamate 5-phosphate. In Cupriavidus metallidurans (strain ATCC 43123 / DSM 2839 / NBRC 102507 / CH34) (Ralstonia metallidurans), this protein is Glutamate 5-kinase.